The following is a 394-amino-acid chain: Probable acetyl-CoA acyltransferase (394 aa).

The Acyl-thioester intermediate role is filled by C88. Active-site proton acceptor residues include H349 and C378.

This sequence belongs to the thiolase-like superfamily. Thiolase family.

It is found in the cytoplasm. The enzyme catalyses 2 acetyl-CoA = acetoacetyl-CoA + CoA. This is Probable acetyl-CoA acyltransferase from Staphylococcus epidermidis (strain ATCC 35984 / DSM 28319 / BCRC 17069 / CCUG 31568 / BM 3577 / RP62A).